The chain runs to 206 residues: Alpha-S1-casein (206 aa).

The first 15 residues, 1 to 15 (MKLLIFICLAAVALA), serve as a signal peptide directing secretion. Residues Ser33, Ser77, Ser78, Ser79, Ser80, Ser81, Ser82, and Ser89 each carry the phosphoserine modification. The tract at residues 67 to 106 (HGMEGHEQRGSSSSSSEEVVGNSAEQKHVQKEEDVPSQSY) is disordered. Over residues 91–100 (EQKHVQKEED) the composition is skewed to basic and acidic residues.

It belongs to the alpha-casein family. Mammary gland specific. Secreted in milk.

It localises to the secreted. Important role in the capacity of milk to transport calcium phosphate. This chain is Alpha-S1-casein (CSN1S1), found in Sus scrofa (Pig).